Reading from the N-terminus, the 574-residue chain is Serine/threonine-protein kinase fray1 (574 aa).

The segment covering 24–41 (NHHDLPDSDSDSSSREEE) has biased composition (basic and acidic residues). The disordered stretch occupies residues 24–64 (NHHDLPDSDSDSSSREEELMNSSGGGNGKEPIGEKKKLPSH). The region spanning 97 to 357 (YNLIEPIGEG…ASKLLEHKVF (261 aa)) is the Protein kinase domain. ATP-binding positions include 103 to 111 (IGEGTEGRV) and Lys126. The active-site Proton acceptor is Asp221. Position 256 is a phosphothreonine; by autocatalysis (Thr256). 3 disordered regions span residues 381-447 (YRES…LVNM), 462-514 (LSSG…PEKE), and 532-554 (FGSP…HEHH). 3 stretches are compositionally biased toward low complexity: residues 386–403 (SPAS…PSSP), 418–441 (KNIK…NLSN), and 462–475 (LSSG…SSDL). The segment covering 478–491 (GHLHKIGTPKKKHS) has biased composition (basic residues). The span at 492-506 (PSGSIGDSHGSISPP) shows a compositional bias: low complexity. Residues 536–553 (KEGDHNHQHHKSEGDHEH) are compositionally biased toward basic and acidic residues.

The protein belongs to the protein kinase superfamily. STE Ser/Thr protein kinase family. STE20 subfamily. The cofactor is Mn(2+). In terms of processing, undergoes autophosphorylation in the catalytic domain.

It carries out the reaction L-seryl-[protein] + ATP = O-phospho-L-seryl-[protein] + ADP + H(+). The enzyme catalyses L-threonyl-[protein] + ATP = O-phospho-L-threonyl-[protein] + ADP + H(+). The chain is Serine/threonine-protein kinase fray1 from Dictyostelium discoideum (Social amoeba).